The chain runs to 36 residues: Cytochrome b6-f complex subunit 7 (36 aa).

Residues 1–5 lie on the Lumenal side of the membrane; it reads NAAAE. The helical transmembrane segment at 6–28 threads the bilayer; sequence IFRIAAVMNGLTLVGVAIGFVLL. Over 29–36 the chain is Stromal; sequence RIEATVEE.

Belongs to the PetM family. In terms of assembly, the 4 large subunits of the cytochrome b6-f complex are cytochrome b6, subunit IV (17 kDa polypeptide, PetD), cytochrome f and the Rieske protein, while the 4 small subunits are PetG, PetL, PetM and PetN. The complex functions as a dimer.

The protein localises to the plastid. The protein resides in the chloroplast thylakoid membrane. Functionally, component of the cytochrome b6-f complex, which mediates electron transfer between photosystem II (PSII) and photosystem I (PSI), cyclic electron flow around PSI, and state transitions. The chain is Cytochrome b6-f complex subunit 7 from Spinacia oleracea (Spinach).